We begin with the raw amino-acid sequence, 440 residues long: RNA polymerase II C-terminal domain phosphatase-like 4 (440 aa).

Low complexity predominate over residues 1-36 (MSVASDSPVHSSSSSDDLAAFLDAELDSASDASSGP). The interval 1 to 49 (MSVASDSPVHSSSSSDDLAAFLDAELDSASDASSGPSEEEEAEDDVESG) is disordered. A compositionally biased stretch (acidic residues) spans 37–47 (SEEEEAEDDVE). One can recognise an FCP1 homology domain in the interval 118–292 (QRQRKLYLVL…DHRYKSLSEL (175 aa)). A BRCT domain is found at 337–429 (VRKEILKGCK…MKQPEENFGL (93 aa)).

As to quaternary structure, interacts with RAP74. Requires Mg(2+) as cofactor. The cofactor is Co(2+). Mn(2+) serves as cofactor.

Its subcellular location is the nucleus. The catalysed reaction is O-phospho-L-seryl-[protein] + H2O = L-seryl-[protein] + phosphate. It carries out the reaction O-phospho-L-threonyl-[protein] + H2O = L-threonyl-[protein] + phosphate. Its function is as follows. Processively dephosphorylates 'Ser-2' and/or 'Ser-5' of the heptad repeats YSPTSPS in the C-terminal domain of the largest RNA polymerase II subunit (RPB1). This promotes the activity of RNA polymerase II. Required for normal plant growth. The polypeptide is RNA polymerase II C-terminal domain phosphatase-like 4 (CPL4) (Arabidopsis thaliana (Mouse-ear cress)).